We begin with the raw amino-acid sequence, 203 residues long: uncharacterized protein (203 aa).

Fe cation is bound by residues His34, Glu97, and His172.

It belongs to the hemerythrin family.

It is found in the mitochondrion. This is an uncharacterized protein from Schizosaccharomyces pombe (strain 972 / ATCC 24843) (Fission yeast).